Reading from the N-terminus, the 203-residue chain is Small ribosomal subunit protein uS4 (203 aa).

Residues 93–173 (RRFDNVVFRS…IPSWIQVDKA (81 aa)) form the S4 RNA-binding domain.

It belongs to the universal ribosomal protein uS4 family. In terms of assembly, part of the 30S ribosomal subunit. Contacts protein S5. The interaction surface between S4 and S5 is involved in control of translational fidelity.

Functionally, one of the primary rRNA binding proteins, it binds directly to 16S rRNA where it nucleates assembly of the body of the 30S subunit. In terms of biological role, with S5 and S12 plays an important role in translational accuracy. The protein is Small ribosomal subunit protein uS4 of Chlorobium phaeobacteroides (strain DSM 266 / SMG 266 / 2430).